A 194-amino-acid chain; its full sequence is 7-methyl-GTP pyrophosphatase (194 aa).

Residue aspartate 70 is the Proton acceptor of the active site.

This sequence belongs to the Maf family. YceF subfamily. The cofactor is a divalent metal cation.

It localises to the cytoplasm. The catalysed reaction is N(7)-methyl-GTP + H2O = N(7)-methyl-GMP + diphosphate + H(+). Functionally, nucleoside triphosphate pyrophosphatase that hydrolyzes 7-methyl-GTP (m(7)GTP). May have a dual role in cell division arrest and in preventing the incorporation of modified nucleotides into cellular nucleic acids. This is 7-methyl-GTP pyrophosphatase from Vibrio vulnificus (strain YJ016).